A 264-amino-acid chain; its full sequence is Ribosomal RNA small subunit methyltransferase A (264 aa).

Positions 12, 14, 40, 61, 86, and 105 each coordinate S-adenosyl-L-methionine.

Belongs to the class I-like SAM-binding methyltransferase superfamily. rRNA adenine N(6)-methyltransferase family. RsmA subfamily.

It is found in the cytoplasm. It catalyses the reaction adenosine(1518)/adenosine(1519) in 16S rRNA + 4 S-adenosyl-L-methionine = N(6)-dimethyladenosine(1518)/N(6)-dimethyladenosine(1519) in 16S rRNA + 4 S-adenosyl-L-homocysteine + 4 H(+). Its function is as follows. Specifically dimethylates two adjacent adenosines (A1518 and A1519) in the loop of a conserved hairpin near the 3'-end of 16S rRNA in the 30S particle. May play a critical role in biogenesis of 30S subunits. In Fusobacterium nucleatum subsp. nucleatum (strain ATCC 25586 / DSM 15643 / BCRC 10681 / CIP 101130 / JCM 8532 / KCTC 2640 / LMG 13131 / VPI 4355), this protein is Ribosomal RNA small subunit methyltransferase A.